Consider the following 409-residue polypeptide: Mitochondrial protein import protein MAS5 (409 aa).

A necessary for HAP1 repression in the absence of heme region spans residues Met1–Arg172. Positions Glu4–Asp72 constitute a J domain. Substrate is bound by residues Ile116 and Leu135–Leu137. A CR-type zinc finger spans residues Gly130–Arg213. Zn(2+) contacts are provided by Cys143, Cys146, Cys159, Cys162, Cys185, and Cys188. CXXCXGXG motif repeat units lie at residues Cys143 to Gly150, Cys159 to Gly166, and Cys185 to Gly192. A Glycyl lysine isopeptide (Lys-Gly) (interchain with G-Cter in ubiquitin) cross-link involves residue Lys198. Zn(2+)-binding residues include Cys201 and Cys204. The stretch at Cys201–Lys208 is one CXXCXGXG motif repeat. Substrate is bound by residues Ile215–Leu216 and Val247–Phe249. Positions Arg382 to Gln409 are disordered. Cys406 bears the Cysteine methyl ester mark. Cys406 carries the S-farnesyl cysteine lipid modification. Residues Ala407–Gln409 constitute a propeptide, removed in mature form.

As to quaternary structure, homodimer. Interacts with HAP1. Component of the HMC including HAP1, SRO9 and YDJ1.

It is found in the cytoplasm. The protein resides in the perinuclear region. Probably involved in mitochondrial protein import. Is also required for efficient translocation of pre-pro-alpha-factor. Involved in heme regulation of HAP1, as a component of the high-molecular-weight (HMC) complex. This is Mitochondrial protein import protein MAS5 (YDJ1) from Saccharomyces cerevisiae (strain ATCC 204508 / S288c) (Baker's yeast).